A 417-amino-acid chain; its full sequence is Protein-lysine 6-oxidase (417 aa).

Residues 1–21 (MRFAWTVLLLGPLQLCALVHC) form the signal peptide. The propeptide at 22-168 (APPAAGQQQP…PPSRVDGMVG (147 aa)) is removed by BMP1. Residues 64–89 (YQPQRRRDPGAAVPGAANASAQQPRT) form a disordered region. The segment covering 73-84 (GAAVPGAANASA) has biased composition (low complexity). Residues asparagine 81, asparagine 97, and asparagine 144 are each glycosylated (N-linked (GlcNAc...) asparagine). The tract at residues 137–174 (AGASRAENQTAPGEVPALSNLRPPSRVDGMVGDDPYNP) is disordered. Residue tyrosine 187 is modified to Sulfotyrosine. The tract at residues 213–417 (PDLVADPYYI…YASGCTISPY (205 aa)) is lysyl-oxidase like. 5 disulfides stabilise this stretch: cysteine 238–cysteine 244, cysteine 291–cysteine 340, cysteine 324–cysteine 330, cysteine 351–cysteine 361, and cysteine 398–cysteine 412. Histidine 292, histidine 294, and histidine 296 together coordinate Cu cation. Residues 320–355 (KASFCLEDTSCDYGYHRRFACTAHTQGLSPGCYDTY) constitute a cross-link (lysine tyrosylquinone (Lys-Tyr)). 2',4',5'-topaquinone is present on tyrosine 355.

The protein belongs to the lysyl oxidase family. In terms of assembly, interacts with MFAP4. Interacts (via propeptide) with EFEMP2; this interaction is strong and facilitates formation of ternary complexes with ELN during elastic fiber assembly; this interaction limits interaction of EFEMP2 with FBLN5. The cofactor is Cu cation. Requires lysine tyrosylquinone residue as cofactor. In terms of processing, the lysine tyrosylquinone cross-link (LTQ) is generated by condensation of the epsilon-amino group of a lysine with a topaquinone produced by oxidation of tyrosine. Post-translationally, proteolytically cleaved by BMP1 which removes the propeptide. Also proteolytically cleaved by ADAMTS2 and ADAMTS14, but not by ADAMTS3, at an additional cleavage site downstream of the BMP1 cleavage site. The propeptide plays a role in directing the deposition of this enzyme to elastic fibers, via interaction with tropoelastin. Cleavage by BMP1 to remove the propeptide does not increase enzymatic activity but increases binding to collagen. Cleavage by ADAMTS2 produces a form with reduced collagen-binding activity. Sulfated at Tyr-187 and also at either Tyr-183 or Tyr-184 which enhances binding to collagen. In terms of tissue distribution, heart, placenta, skeletal muscle, kidney, lung and pancreas.

The protein resides in the secreted. Its subcellular location is the extracellular space. The enzyme catalyses L-lysyl-[protein] + O2 + H2O = (S)-2-amino-6-oxohexanoyl-[protein] + H2O2 + NH4(+). Responsible for the post-translational oxidative deamination of peptidyl lysine residues in precursors to fibrous collagen and elastin. Regulator of Ras expression. May play a role in tumor suppression. Plays a role in the aortic wall architecture. The polypeptide is Protein-lysine 6-oxidase (LOX) (Homo sapiens (Human)).